A 218-amino-acid chain; its full sequence is Eukaryotic translation initiation factor 3 subunit K (218 aa).

N-acetylalanine is present on alanine 2. Threonine 28 is subject to Phosphothreonine. A PCI domain is found at 42-204 (YDLEANLAVL…SIKPKNIVEK (163 aa)). Serine 217 carries the post-translational modification Phosphoserine.

This sequence belongs to the eIF-3 subunit K family. In terms of assembly, component of the eukaryotic translation initiation factor 3 (eIF-3) complex, which is composed of 13 subunits: EIF3A, EIF3B, EIF3C, EIF3D, EIF3E, EIF3F, EIF3G, EIF3H, EIF3I, EIF3J, EIF3K, EIF3L and EIF3M. The eIF-3 complex appears to include 3 stable modules: module A is composed of EIF3A, EIF3B, EIF3G and EIF3I; module B is composed of EIF3F, EIF3H, and EIF3M; and module C is composed of EIF3C, EIF3D, EIF3E, EIF3K and EIF3L. EIF3C of module C binds EIF3B of module A and EIF3H of module B, thereby linking the three modules. EIF3J is a labile subunit that binds to the eIF-3 complex via EIF3B. The eIF-3 complex interacts with RPS6KB1 under conditions of nutrient depletion. Mitogenic stimulation leads to binding and activation of a complex composed of MTOR and RPTOR, leading to phosphorylation and release of RPS6KB1 and binding of EIF4B to eIF-3. Interacts with CCND3, but not with CCND1 and CCND2.

Its subcellular location is the nucleus. It is found in the cytoplasm. Component of the eukaryotic translation initiation factor 3 (eIF-3) complex, which is required for several steps in the initiation of protein synthesis. The eIF-3 complex associates with the 40S ribosome and facilitates the recruitment of eIF-1, eIF-1A, eIF-2:GTP:methionyl-tRNAi and eIF-5 to form the 43S pre-initiation complex (43S PIC). The eIF-3 complex stimulates mRNA recruitment to the 43S PIC and scanning of the mRNA for AUG recognition. The eIF-3 complex is also required for disassembly and recycling of post-termination ribosomal complexes and subsequently prevents premature joining of the 40S and 60S ribosomal subunits prior to initiation. The eIF-3 complex specifically targets and initiates translation of a subset of mRNAs involved in cell proliferation, including cell cycling, differentiation and apoptosis, and uses different modes of RNA stem-loop binding to exert either translational activation or repression. This is Eukaryotic translation initiation factor 3 subunit K from Bos taurus (Bovine).